A 348-amino-acid chain; its full sequence is sn-glycerol-3-phosphate import ATP-binding protein UgpC (348 aa).

The 232-residue stretch at 4–235 (IQLSNIKKQY…PETTFVADFI (232 aa)) folds into the ABC transporter domain. 37 to 44 (GPSGCGKS) provides a ligand contact to ATP.

It belongs to the ABC transporter superfamily. sn-glycerol-3-phosphate importer (TC 3.A.1.1.3) family. As to quaternary structure, the complex is composed of two ATP-binding proteins (UgpC), two transmembrane proteins (UgpA and UgpE) and a solute-binding protein (UgpB).

The protein localises to the cell inner membrane. The enzyme catalyses sn-glycerol 3-phosphate(out) + ATP + H2O = sn-glycerol 3-phosphate(in) + ADP + phosphate + H(+). In terms of biological role, part of the ABC transporter complex UgpBAEC involved in sn-glycerol-3-phosphate (G3P) import. Responsible for energy coupling to the transport system. The protein is sn-glycerol-3-phosphate import ATP-binding protein UgpC of Bartonella quintana (strain Toulouse) (Rochalimaea quintana).